A 126-amino-acid polypeptide reads, in one-letter code: Fluoride-specific ion channel FluC (126 aa).

Transmembrane regions (helical) follow at residues 5–25 (IAVI…FALW), 34–54 (WGTL…LAVF), 67–87 (LVIT…GEVV), and 95–115 (FGLA…LTWA). Na(+)-binding residues include glycine 74 and threonine 77.

It belongs to the fluoride channel Fluc/FEX (TC 1.A.43) family.

The protein localises to the cell inner membrane. The catalysed reaction is fluoride(in) = fluoride(out). Its activity is regulated as follows. Na(+) is not transported, but it plays an essential structural role and its presence is essential for fluoride channel function. Fluoride-specific ion channel. Important for reducing fluoride concentration in the cell, thus reducing its toxicity. The sequence is that of Fluoride-specific ion channel FluC from Paracidovorax citrulli (strain AAC00-1) (Acidovorax citrulli).